The chain runs to 136 residues: Small ribosomal subunit protein uS8c (136 aa).

The protein belongs to the universal ribosomal protein uS8 family. As to quaternary structure, part of the 30S ribosomal subunit.

The protein localises to the plastid. The protein resides in the chloroplast. In terms of biological role, one of the primary rRNA binding proteins, it binds directly to 16S rRNA central domain where it helps coordinate assembly of the platform of the 30S subunit. This chain is Small ribosomal subunit protein uS8c (rps8), found in Tetradesmus obliquus (Green alga).